The following is a 218-amino-acid chain: Glutathione S-transferase Mu 5 (218 aa).

One can recognise a GST N-terminal domain in the interval 2-88; that stretch reads PMTLGYWDIR…YIARKHNLCG (87 aa). Residues 7 to 8, 46 to 50, 59 to 60, and 72 to 73 contribute to the glutathione site; these read YW, WLNEK, NL, and QS. Positions 90 to 207 constitute a GST C-terminal domain; sequence TEEEKIRVDI…MKSSQFLRGL (118 aa). Tyrosine 116 contributes to the substrate binding site.

It belongs to the GST superfamily. Mu family. As to quaternary structure, homodimer.

Its subcellular location is the cytoplasm. The enzyme catalyses RX + glutathione = an S-substituted glutathione + a halide anion + H(+). Conjugation of reduced glutathione to a wide number of exogenous and endogenous hydrophobic electrophiles. The protein is Glutathione S-transferase Mu 5 (GSTM5) of Homo sapiens (Human).